The following is a 227-amino-acid chain: PKHD-type hydroxylase M446_1130 (227 aa).

In terms of domain architecture, Fe2OG dioxygenase spans 78–178 (QIFPPLFNRY…RVASFFWLQS (101 aa)). 3 residues coordinate Fe cation: His-96, Asp-98, and His-159. Arg-169 lines the 2-oxoglutarate pocket.

The cofactor is Fe(2+). Requires L-ascorbate as cofactor.

The protein is PKHD-type hydroxylase M446_1130 of Methylobacterium sp. (strain 4-46).